We begin with the raw amino-acid sequence, 134 residues long: Thyrotropin subunit beta (134 aa).

An N-terminal signal peptide occupies residues 1-16 (MSPFFMMSLLFGLTFG). 6 cysteine pairs are disulfide-bonded: cysteine 22/cysteine 72, cysteine 36/cysteine 87, cysteine 39/cysteine 125, cysteine 47/cysteine 103, cysteine 51/cysteine 105, and cysteine 108/cysteine 115. The N-linked (GlcNAc...) asparagine glycan is linked to asparagine 43.

This sequence belongs to the glycoprotein hormones subunit beta family. As to quaternary structure, heterodimer of a common alpha chain and a unique beta chain which confers biological specificity to thyrotropin, lutropin, follitropin and gonadotropin.

It localises to the secreted. Indispensable for the control of thyroid structure and metabolism. The protein is Thyrotropin subunit beta (TSHB) of Gallus gallus (Chicken).